A 392-amino-acid polypeptide reads, in one-letter code: tRNA (guanine(6)-N2)-methyltransferase (392 aa).

Residues 73–183 enclose the THUMP domain; sequence SAIPLLNHFS…DSELFVGVDT (111 aa). S-adenosyl-L-methionine contacts are provided by residues 199-203, 230-232, Glu-275, 303-304, and Asn-317; these read HPAHL, SGT, and DA.

This sequence belongs to the methyltransferase superfamily.

Its subcellular location is the cytoplasm. It catalyses the reaction guanosine(6) in tRNA + S-adenosyl-L-methionine = N(2)-methylguanosine(6) in tRNA + S-adenosyl-L-homocysteine + H(+). In terms of biological role, S-adenosyl-L-methionine-dependent methyltransferase that catalyzes the methylation of the guanosine nucleotide at position 6 (m2G6) in tRNA. The protein is tRNA (guanine(6)-N2)-methyltransferase of Archaeoglobus fulgidus (strain ATCC 49558 / DSM 4304 / JCM 9628 / NBRC 100126 / VC-16).